The chain runs to 185 residues: HTH-type transcriptional regulator Hpr (185 aa).

An HTH marR-type domain is found at 13–157 (AMIFSQRIAQ…LIAILRNIYG (145 aa)). A DNA-binding region (H-T-H motif) is located at residues 63-86 (ISEIAKFGVMHVSTAFNFSKKLEE).

In terms of assembly, homodimer.

Functionally, negative regulator of protease production and sporulation. This is HTH-type transcriptional regulator Hpr from Bacillus cytotoxicus (strain DSM 22905 / CIP 110041 / 391-98 / NVH 391-98).